A 408-amino-acid polypeptide reads, in one-letter code: 3-ketoacyl-CoA thiolase A, peroxisomal (408 aa).

C112 (acyl-thioester intermediate) is an active-site residue. Residues H366 and C394 each act as proton acceptor in the active site.

Belongs to the thiolase-like superfamily. Thiolase family. As to quaternary structure, homodimer.

The protein resides in the peroxisome. It carries out the reaction an acyl-CoA + acetyl-CoA = a 3-oxoacyl-CoA + CoA. The protein operates within lipid metabolism; fatty acid metabolism. This chain is 3-ketoacyl-CoA thiolase A, peroxisomal, found in Candida tropicalis (Yeast).